Reading from the N-terminus, the 481-residue chain is Glutamate--cysteine ligase (481 aa).

The protein belongs to the glutamate--cysteine ligase type 1 family. Type 1 subfamily.

The enzyme catalyses L-cysteine + L-glutamate + ATP = gamma-L-glutamyl-L-cysteine + ADP + phosphate + H(+). The protein operates within sulfur metabolism; glutathione biosynthesis; glutathione from L-cysteine and L-glutamate: step 1/2. This is Glutamate--cysteine ligase from Clostridium acetobutylicum (strain ATCC 824 / DSM 792 / JCM 1419 / IAM 19013 / LMG 5710 / NBRC 13948 / NRRL B-527 / VKM B-1787 / 2291 / W).